The chain runs to 1849 residues: NADH-ubiquinone oxidoreductase chain 5 (1849 aa).

The next 41 membrane-spanning stretches (helical) occupy residues 76–93 (YLLLYYCIYALELYTVCY), 98–120 (LILLYLIQLNYILLTNIVGYLQY), 190–212 (YWLCVVIWNNIGWWTYQLMIIGW), 222–244 (LVPTILAIINLILTYIDLIIYLY), 279–301 (HLLTVIIPNYCLAIYNSGLILSS), 316–338 (LALQYLVAPLYISCSLLIYILCY), 358–380 (LEIIYLDILVNSLISIIILILSV), 390–412 (VIILSQYINIISGYVAMPTTILI), 419–441 (IAVYIYYLVDYIATISTLIIWLL), 483–505 (LLDAIMNVVTSVILLITVSCLGV), 510–532 (LFIAVYPVYCIGVLLLNTLLQVV), 536–558 (ISYIIGTFMNAIILICDIYVYSI), 565–587 (LIMYVYFVAAIILEPIIDIIHTI), 621–640 (IWLIADLILAYIDLIRSTLV), 683–705 (WVRFLIYCAGNNINLLVLLYVQF), 718–740 (LTRIQLYATIPVIISSYIYQGIL), 745–767 (IISYYNTLLVATLEFIQIWLTIL), 797–819 (PTWVLFECLSTCVGLVELYLVTV), 868–890 (ILLLMSSGLQSTVLNTIFDLLSL), 905–927 (LTVQVCTIPAALYSTIIYPYIVL), 966–988 (LYSYNLYLLELYNIYYFWLSLLE), 1008–1030 (PDLLISLISYIIDICILSLELLL), 1073–1095 (LTVVFYILNLCGILNEISIQILF), 1105–1127 (LATIYCTVVLPYILIILEILSYL), 1172–1194 (TYLLYIVLEQLLLVIIDLYIYII), 1219–1241 (VYFLYFMIFIGYLLCGIFAFFYH), 1248–1270 (GIFYLSEMIIMGILIFSIVTLYY), 1296–1318 (IITFDILSILGVLLVATLTAIIL), 1330–1352 (FAYNVLATLVLFSASIICFIVSY), 1357–1379 (MIIFWEISGTLSLFLIDMYYARI), 1418–1440 (LFALLPYAQFNLSILGNLIFDFT), 1444–1466 (VIVFSIFSAAACKCAQFLLFVWL), 1478–1500 (ALIHSSTLVVMGIFMILRFAPIL), 1504–1526 (VYTLYIMSILGSLTVAYGAILAT), 1533–1555 (KAVAYSTISQIGYLFTGCAFLAF), 1559–1581 (LIYLILHAICKALLFVLVGYIVH), 1602–1624 (IAIYMFILCMVLAGAPYTVGFFA), 1639–1661 (VATFIICCWIISFACTPFYLYRI), 1719–1741 (LLHLLLLLIVLFCGEFLVFLVTG), 1773–1795 (VRNIQLLIIVLFALVTLYITAIN), and 1802–1824 (IIYLSVVLPILAIIFICLGHYFL).

This sequence belongs to the complex I subunit 5 family.

The protein localises to the hydrogenosome membrane. The enzyme catalyses a ubiquinone + NADH + 5 H(+)(in) = a ubiquinol + NAD(+) + 4 H(+)(out). This chain is NADH-ubiquinone oxidoreductase chain 5 (nad5), found in Nyctotherus ovalis.